The following is a 122-amino-acid chain: Large ribosomal subunit protein uL14 (122 aa).

This sequence belongs to the universal ribosomal protein uL14 family. In terms of assembly, part of the 50S ribosomal subunit. Forms a cluster with proteins L3 and L19. In the 70S ribosome, L14 and L19 interact and together make contacts with the 16S rRNA in bridges B5 and B8.

Binds to 23S rRNA. Forms part of two intersubunit bridges in the 70S ribosome. This Bacillus pumilus (strain SAFR-032) protein is Large ribosomal subunit protein uL14.